A 177-amino-acid polypeptide reads, in one-letter code: ATP-dependent protease subunit HslV (177 aa).

Thr2 is a catalytic residue. The Na(+) site is built by Gly157, Cys160, and Thr163.

Belongs to the peptidase T1B family. HslV subfamily. A double ring-shaped homohexamer of HslV is capped on each side by a ring-shaped HslU homohexamer. The assembly of the HslU/HslV complex is dependent on binding of ATP.

The protein localises to the cytoplasm. The catalysed reaction is ATP-dependent cleavage of peptide bonds with broad specificity.. Its activity is regulated as follows. Allosterically activated by HslU binding. In terms of biological role, protease subunit of a proteasome-like degradation complex believed to be a general protein degrading machinery. This is ATP-dependent protease subunit HslV from Aeromonas salmonicida (strain A449).